The following is a 506-amino-acid chain: Zinc finger protein 157 (506 aa).

Residues 27–98 (VSFEDVAVDF…EEESSGHGYS (72 aa)) form the KRAB domain. C2H2-type zinc fingers lie at residues 162 to 184 (FECH…LRIH), 190 to 212 (YECG…QKTH), 218 to 240 (FECN…TRTH), 246 to 268 (YECT…QRTH), 274 to 296 (YECS…HRTH), 302 to 324 (YECG…QRIH), 330 to 352 (YECG…QRTH), 358 to 380 (YQCN…QRIH), 386 to 408 (YECN…QRMH), 414 to 436 (YECS…RRTH), 442 to 464 (YECS…QRIH), and 470 to 492 (FECQ…QRTH).

It belongs to the krueppel C2H2-type zinc-finger protein family.

The protein localises to the nucleus. Its function is as follows. May be involved in transcriptional regulation. This Homo sapiens (Human) protein is Zinc finger protein 157 (ZNF157).